The sequence spans 487 residues: Probable cytochrome P450 516A1 (487 aa).

The helical transmembrane segment at 1-21 threads the bilayer; that stretch reads MIILLLSIIIFILYIVKIFKN. A heme-binding site is contributed by C434.

This sequence belongs to the cytochrome P450 family. It depends on heme as a cofactor.

Its subcellular location is the membrane. This chain is Probable cytochrome P450 516A1 (cyp516A1), found in Dictyostelium discoideum (Social amoeba).